The sequence spans 115 residues: Divalent-cation tolerance protein CutA (115 aa).

Residues Cys19, His86, and His87 each contribute to the Cu cation site.

The protein belongs to the CutA family. Homotrimer. Cu cation is required as a cofactor.

The protein localises to the cytoplasm. Functionally, involved in resistance toward heavy metals. This Salmonella agona (strain SL483) protein is Divalent-cation tolerance protein CutA.